The chain runs to 575 residues: Carboxylesterase 5A (575 aa).

The signal sequence occupies residues 1 to 27; that stretch reads MSGEWGHLGQTLIWAVWVLAAATEGPA. Asn-82 is a glycosylation site (N-linked (GlcNAc...) asparagine). Cys-94 and Cys-121 are joined by a disulfide. Catalysis depends on Ser-226, which acts as the Acyl-ester intermediate. A disulfide bridge connects residues Cys-280 and Cys-291. Asn-281 carries an N-linked (GlcNAc...) asparagine glycan. Glu-345 serves as the catalytic Charge relay system. Residue Asn-363 is glycosylated (N-linked (GlcNAc...) asparagine). His-454 acts as the Charge relay system in catalysis. N-linked (GlcNAc...) asparagine glycosylation occurs at Asn-524.

This sequence belongs to the type-B carboxylesterase/lipase family. In terms of processing, N-glycosylated.

The protein resides in the secreted. It carries out the reaction a carboxylic ester + H2O = an alcohol + a carboxylate + H(+). Its function is as follows. Involved in the detoxification of xenobiotics and in the activation of ester and amide prodrugs. This is Carboxylesterase 5A (CES5A) from Canis lupus familiaris (Dog).